The primary structure comprises 633 residues: Extracellular metalloproteinase 3 (633 aa).

The first 18 residues, 1 to 18 (MHGLLLAGLLALPMNVLA), serve as a signal peptide directing secretion. Positions 19–246 (HPAEQQTSSV…VHNVVDYVAS (228 aa)) are excised as a propeptide. Asn-410 is a glycosylation site (N-linked (GlcNAc...) asparagine). His-429 provides a ligand contact to Zn(2+). The active site involves Glu-430. His-433 contributes to the Zn(2+) binding site. Asn-480 carries N-linked (GlcNAc...) asparagine glycosylation.

Belongs to the peptidase M36 family. Zn(2+) serves as cofactor.

The protein localises to the secreted. Functionally, secreted metalloproteinase probably acting as a virulence factor. This chain is Extracellular metalloproteinase 3 (MEP3), found in Arthroderma otae (Microsporum canis).